A 360-amino-acid chain; its full sequence is Photosystem II protein D1 (360 aa).

3 helical membrane-spanning segments follow: residues 30 to 47, 119 to 134, and 143 to 157; these read YVGWFGVLMIPCLLAATT, HFLIGISAYMGRQWEL, and WICVAYSAPVSAAFA. H119 contacts chlorophyll a. Pheophytin a is bound at residue Y127. Positions 171 and 190 each coordinate [CaMn4O5] cluster. A helical membrane pass occupies residues 198–219; it reads FHMAGVAGMFGGALFSAMHGSL. H199 provides a ligand contact to chlorophyll a. Residues H216 and 265-266 each bind a quinone; that span reads SF. Fe cation is bound at residue H216. H273 is a binding site for Fe cation. The helical transmembrane segment at 275–289 threads the bilayer; the sequence is FLASWPVICVWLTSM. [CaMn4O5] cluster-binding residues include H333, E334, D343, and A345. Residues 346–360 constitute a propeptide that is removed on maturation; sequence AAESTSVALVAPAIG.

The protein belongs to the reaction center PufL/M/PsbA/D family. In terms of assembly, PSII is composed of 1 copy each of membrane proteins PsbA, PsbB, PsbC, PsbD, PsbE, PsbF, PsbH, PsbI, PsbJ, PsbK, PsbL, PsbM, PsbT, PsbX, PsbY, Psb30/Ycf12, peripheral proteins PsbO, CyanoQ (PsbQ), PsbU, PsbV and a large number of cofactors. It forms dimeric complexes. It depends on The D1/D2 heterodimer binds P680, chlorophylls that are the primary electron donor of PSII, and subsequent electron acceptors. It shares a non-heme iron and each subunit binds pheophytin, quinone, additional chlorophylls, carotenoids and lipids. D1 provides most of the ligands for the Mn4-Ca-O5 cluster of the oxygen-evolving complex (OEC). There is also a Cl(-1) ion associated with D1 and D2, which is required for oxygen evolution. The PSII complex binds additional chlorophylls, carotenoids and specific lipids. as a cofactor. Post-translationally, tyr-162 forms a radical intermediate that is referred to as redox-active TyrZ, YZ or Y-Z. C-terminally processed by CtpA; processing is essential to allow assembly of the oxygen-evolving complex and thus photosynthetic growth.

Its subcellular location is the cellular thylakoid membrane. It carries out the reaction 2 a plastoquinone + 4 hnu + 2 H2O = 2 a plastoquinol + O2. Its function is as follows. Photosystem II (PSII) is a light-driven water:plastoquinone oxidoreductase that uses light energy to abstract electrons from H(2)O, generating O(2) and a proton gradient subsequently used for ATP formation. It consists of a core antenna complex that captures photons, and an electron transfer chain that converts photonic excitation into a charge separation. The D1/D2 (PsbA/PsbD) reaction center heterodimer binds P680, the primary electron donor of PSII as well as several subsequent electron acceptors. This Prochlorococcus marinus (strain NATL1A) protein is Photosystem II protein D1.